The following is a 379-amino-acid chain: Cathepsin B-like cysteine proteinase 6 (379 aa).

Residues M1–C16 form the signal peptide. Residues A17–D104 constitute a propeptide that is removed on maturation. Intrachain disulfides connect C118–C147, C130–C174, C166–C233, C167–C170, C203–C237, and C211–C223. The active site involves C133. N196 carries an N-linked (GlcNAc...) asparagine glycan. N201 carries an N-linked (GlcNAc...) asparagine; atypical glycan. Catalysis depends on residues H305 and N325.

Belongs to the peptidase C1 family.

The sequence is that of Cathepsin B-like cysteine proteinase 6 (cpr-6) from Caenorhabditis elegans.